The primary structure comprises 528 residues: MDARALWQRYQNWLYFHEGLGLYLDISRMRFDDAFVESLQPKFDKAFADMAELEKGAIANPDENRMVGHYWLRNPDLAPTPELTQEIVQTLEQIEAFAEKVQTGAIHPPRASRFTDIISIGIGGSALGPQFVAEALAPDFPPLKIHFIDNNDPAGIDRVLNHLRNSLASTLVLVISKSGGTPEPRNGMIEVKKAYAGHNLEFAQYAVAITSVDSNLDKLAKDEGWLARFPMYDWVGGRTSEMSAVGLVPAALQGIDVRAMLDGAKEMDDATRVPDVKNNPAALLALSWYFAGNGKGEKDMVVLPYKDSLFLFSRYLQQLVMESLGKEKDLDGNVVHQGIAVYGNKGSTDQHAYVQQLREGVANFFATFVEVLEDRQGPSTEIDPGVTSGDYLSGFLQGTRQALYENHRDSITVTIPQVNPRTVGALIALYERAVGLYASLVNVNAYHQPGVEAGKKAAASILDLQTRVVAVLQKEKTPISLDELAKKAGASDQIEAIYKILRHIHANQRGVVLQGDLHKPGSLTVSAS.

The Proton donor role is filled by Glu322. Residues His351 and Lys455 contribute to the active site.

Belongs to the GPI family.

It localises to the cytoplasm. It catalyses the reaction alpha-D-glucose 6-phosphate = beta-D-fructose 6-phosphate. It functions in the pathway carbohydrate biosynthesis; gluconeogenesis. Its pathway is carbohydrate degradation; glycolysis; D-glyceraldehyde 3-phosphate and glycerone phosphate from D-glucose: step 2/4. In terms of biological role, catalyzes the reversible isomerization of glucose-6-phosphate to fructose-6-phosphate. In Nostoc punctiforme (strain ATCC 29133 / PCC 73102), this protein is Glucose-6-phosphate isomerase.